Consider the following 147-residue polypeptide: Fibromodulin (147 aa).

LRR repeat units lie at residues 1–15, 16–37, 40–61, 63–84, 85–105, and 108–128; these read LDHN…PLPR, SLRE…ALEG, NLTA…MRGL, SLIL…LPSA, LEQL…YFRG, and KLLY…ASNT. A glycan (N-linked (GlcNAc...) (keratan sulfate) asparagine) is linked at Asn5. The N-linked (GlcNAc...) (keratan sulfate) asparagine glycan is linked to Asn40. A glycan (N-linked (GlcNAc...) (keratan sulfate) asparagine) is linked at Asn130. An LRR 7 repeat occupies 133 to 147; the sequence is SLLELDLSYNQLQKI.

The protein belongs to the small leucine-rich proteoglycan (SLRP) family. SLRP class II subfamily. In terms of assembly, binds to type I and type II collagen. Binds keratan sulfate chains.

It is found in the secreted. Its subcellular location is the extracellular space. It localises to the extracellular matrix. Its function is as follows. Affects the rate of fibrils formation. May have a primary role in collagen fibrillogenesis. The protein is Fibromodulin (FMOD) of Sus scrofa (Pig).